We begin with the raw amino-acid sequence, 219 residues long: Ribose-5-phosphate isomerase A (219 aa).

Substrate contacts are provided by residues 29–32 (TGST), 82–85 (DGAD), and 95–98 (KGGG). Catalysis depends on E104, which acts as the Proton acceptor. Residue K122 participates in substrate binding.

It belongs to the ribose 5-phosphate isomerase family. In terms of assembly, homodimer.

It carries out the reaction aldehydo-D-ribose 5-phosphate = D-ribulose 5-phosphate. The protein operates within carbohydrate degradation; pentose phosphate pathway; D-ribose 5-phosphate from D-ribulose 5-phosphate (non-oxidative stage): step 1/1. Functionally, catalyzes the reversible conversion of ribose-5-phosphate to ribulose 5-phosphate. In Chromobacterium violaceum (strain ATCC 12472 / DSM 30191 / JCM 1249 / CCUG 213 / NBRC 12614 / NCIMB 9131 / NCTC 9757 / MK), this protein is Ribose-5-phosphate isomerase A.